Here is a 494-residue protein sequence, read N- to C-terminus: tRNA-2-methylthio-N(6)-dimethylallyladenosine synthase (494 aa).

In terms of domain architecture, MTTase N-terminal spans 4–120 (RSYQVRTFGC…LPVLLERARH (117 aa)). [4Fe-4S] cluster-binding residues include cysteine 13, cysteine 49, cysteine 83, cysteine 157, cysteine 161, and cysteine 164. In terms of domain architecture, Radical SAM core spans 143–374 (RASHHSAWVS…SLQDEMSWAE (232 aa)). One can recognise a TRAM domain in the interval 376-449 (RAQVGRRVEI…PHHLTADGPL (74 aa)). Residues 465-494 (RAIAGDTPRPDRPAVSLGMPQLRPSAPAAR) are disordered.

This sequence belongs to the methylthiotransferase family. MiaB subfamily. As to quaternary structure, monomer. The cofactor is [4Fe-4S] cluster.

It localises to the cytoplasm. The enzyme catalyses N(6)-dimethylallyladenosine(37) in tRNA + (sulfur carrier)-SH + AH2 + 2 S-adenosyl-L-methionine = 2-methylsulfanyl-N(6)-dimethylallyladenosine(37) in tRNA + (sulfur carrier)-H + 5'-deoxyadenosine + L-methionine + A + S-adenosyl-L-homocysteine + 2 H(+). Functionally, catalyzes the methylthiolation of N6-(dimethylallyl)adenosine (i(6)A), leading to the formation of 2-methylthio-N6-(dimethylallyl)adenosine (ms(2)i(6)A) at position 37 in tRNAs that read codons beginning with uridine. In Parafrankia sp. (strain EAN1pec), this protein is tRNA-2-methylthio-N(6)-dimethylallyladenosine synthase.